The primary structure comprises 170 residues: ATP synthase subunit b, chloroplastic (170 aa).

Residues 15–35 (ILETNVINLAVVVGVVVFFVG) traverse the membrane as a helical segment.

It belongs to the ATPase B chain family. In terms of assembly, F-type ATPases have 2 components, F(1) - the catalytic core - and F(0) - the membrane proton channel. F(1) has five subunits: alpha(3), beta(3), gamma(1), delta(1), epsilon(1). F(0) has four main subunits: a(1), b(1), b'(1) and c(10-14). The alpha and beta chains form an alternating ring which encloses part of the gamma chain. F(1) is attached to F(0) by a central stalk formed by the gamma and epsilon chains, while a peripheral stalk is formed by the delta, b and b' chains.

The protein resides in the plastid. It localises to the chloroplast thylakoid membrane. Functionally, f(1)F(0) ATP synthase produces ATP from ADP in the presence of a proton or sodium gradient. F-type ATPases consist of two structural domains, F(1) containing the extramembraneous catalytic core and F(0) containing the membrane proton channel, linked together by a central stalk and a peripheral stalk. During catalysis, ATP synthesis in the catalytic domain of F(1) is coupled via a rotary mechanism of the central stalk subunits to proton translocation. In terms of biological role, component of the F(0) channel, it forms part of the peripheral stalk, linking F(1) to F(0). The chain is ATP synthase subunit b, chloroplastic from Stigeoclonium helveticum (Green alga).